Consider the following 388-residue polypeptide: Chorismate synthase (388 aa).

2 residues coordinate NADP(+): R39 and R45. FMN is bound by residues 130-132 (RSS), 251-252 (NA), G296, 311-315 (KPIPT), and R337.

This sequence belongs to the chorismate synthase family. In terms of assembly, homotetramer. Requires FMNH2 as cofactor.

It catalyses the reaction 5-O-(1-carboxyvinyl)-3-phosphoshikimate = chorismate + phosphate. Its pathway is metabolic intermediate biosynthesis; chorismate biosynthesis; chorismate from D-erythrose 4-phosphate and phosphoenolpyruvate: step 7/7. Catalyzes the anti-1,4-elimination of the C-3 phosphate and the C-6 proR hydrogen from 5-enolpyruvylshikimate-3-phosphate (EPSP) to yield chorismate, which is the branch point compound that serves as the starting substrate for the three terminal pathways of aromatic amino acid biosynthesis. This reaction introduces a second double bond into the aromatic ring system. The chain is Chorismate synthase from Streptococcus pneumoniae serotype 2 (strain D39 / NCTC 7466).